Consider the following 377-residue polypeptide: Phosphoserine aminotransferase (377 aa).

Arginine 43 contributes to the L-glutamate binding site. Tryptophan 105, threonine 164, aspartate 189, and glutamine 212 together coordinate pyridoxal 5'-phosphate. N6-(pyridoxal phosphate)lysine is present on lysine 213. Residue 254–255 (NT) participates in pyridoxal 5'-phosphate binding.

Belongs to the class-V pyridoxal-phosphate-dependent aminotransferase family. SerC subfamily. Homodimer. It depends on pyridoxal 5'-phosphate as a cofactor.

It is found in the cytoplasm. The enzyme catalyses O-phospho-L-serine + 2-oxoglutarate = 3-phosphooxypyruvate + L-glutamate. It catalyses the reaction 4-(phosphooxy)-L-threonine + 2-oxoglutarate = (R)-3-hydroxy-2-oxo-4-phosphooxybutanoate + L-glutamate. It participates in amino-acid biosynthesis; L-serine biosynthesis; L-serine from 3-phospho-D-glycerate: step 2/3. The protein operates within cofactor biosynthesis; pyridoxine 5'-phosphate biosynthesis; pyridoxine 5'-phosphate from D-erythrose 4-phosphate: step 3/5. Catalyzes the reversible conversion of 3-phosphohydroxypyruvate to phosphoserine and of 3-hydroxy-2-oxo-4-phosphonooxybutanoate to phosphohydroxythreonine. This Bordetella pertussis (strain Tohama I / ATCC BAA-589 / NCTC 13251) protein is Phosphoserine aminotransferase.